The chain runs to 129 residues: Small ribosomal subunit protein bS16m (129 aa).

This sequence belongs to the bacterial ribosomal protein bS16 family. Component of the mitochondrial ribosome small subunit (28S) which comprises a 12S rRNA and about 30 distinct proteins.

The protein resides in the mitochondrion. The protein is Small ribosomal subunit protein bS16m (mRpS16) of Drosophila melanogaster (Fruit fly).